We begin with the raw amino-acid sequence, 765 residues long: Amyloid beta precursor like protein 2 (765 aa).

Positions 1–31 are cleaved as a signal peptide; it reads MAATGTAAAAATGKLLVLLLLGLTAPAAALA. Over 32–695 the chain is Extracellular; sequence GYIEALAANA…LREDFSLSSS (664 aa). Residues 46-139 form a GFLD subdomain region; it reads AVAEPQIAMF…PFKCLVGEFV (94 aa). The region spanning 46–205 is the E1 domain; it reads AVAEPQIAMF…HGTEYVCCPQ (160 aa). Disulfide bonds link C56–C80, C91–C133, C116–C123, C149–C203, C160–C190, and C174–C202. The cuBD subdomain stretch occupies residues 147–205; sequence ENCQFFHQERMEVCEKHQRWHTVVKEACLTEGMTLYSYGMLLPCGVDQFHGTEYVCCPQ. Cu cation is bound by residues H163, H167, and Y184. The tract at residues 211–301 is disordered; it reads SDSTMSKEEE…EPSSDGTISD (91 aa). S216 carries the phosphoserine modification. Acidic residues-rich tracts occupy residues 218-231 and 240-271; these read EEEEEEEEDEEEDY and TEADLEDFTEAAADEDEDEEEEEEEEGEEVVE. Residues 272–284 show a composition bias toward basic and acidic residues; the sequence is DRDYYYDSFKGDD. The BPTI/Kunitz inhibitor domain occupies 308-366; it reads VKAVCSQEAMTGPCRAVMPRWYFDLSKGKCVRFIYGGCGGNRNNFESEDYCMAVCKTMI. Cystine bridges form between C312/C362, C321/C345, and C337/C358. An E2 domain is found at 375–566; sequence DVDVYFETSA…QEIQEEIDEL (192 aa). S592 bears the Phosphoserine mark. Positions 597 to 616 are disordered; the sequence is EIPPFHPFHPFPSLSENEDT. A glycan (O-linked (Xyl...) (chondroitin sulfate) serine) is linked at S628. Residues 696-718 traverse the membrane as a helical segment; sequence ALIGLLVIAVAIATVIVISLVML. Residues 719 to 765 lie on the Cytoplasmic side of the membrane; the sequence is RKRQYGTISHGIVEVHPMLTPEERHLNKMQNHGYENPTYKYLEQMQI. The segment at 751-765 is interaction with DAB2; it reads GYENPTYKYLEQMQI. An NPXY motif motif is present at residues 752–757; the sequence is YENPTY.

This sequence belongs to the APP family. Interacts with CPEB1. Interacts (via NPXY motif) with DAB2 (via PID domain); the interaction is impaired by tyrosine phosphorylation of the NPXY motif. Interacts (via cytoplasmic domain) with APBB2/FE65L. Interacts (via intracellular domain) with APBB3/FE65L2.

It is found in the membrane. May play a role in the regulation of hemostasis. The soluble form may have inhibitory properties towards coagulation factors. May interact with cellular G-protein signaling pathways. May bind to the DNA 5'-GTCACATG-3'(CDEI box). Inhibits trypsin, chymotrypsin, plasmin, factor XIA and plasma and glandular kallikrein. Modulates the Cu/Zn nitric oxide-catalyzed autodegradation of GPC1 heparan sulfate side chains in fibroblasts. In Rattus norvegicus (Rat), this protein is Amyloid beta precursor like protein 2.